We begin with the raw amino-acid sequence, 469 residues long: GDP-fucose protein O-fucosyltransferase 2 (469 aa).

A signal peptide spans 1–18 (MKFIIVLLLFFFFKVIDR). Residues 56–60 (GEGFN), 277–279 (HLR), and 373–374 (RF) each bind GDP-beta-L-fucose. Residue E57 is the Proton acceptor of the active site.

The protein belongs to the glycosyltransferase 68 family.

It is found in the endoplasmic reticulum. The catalysed reaction is L-seryl-[protein] + GDP-beta-L-fucose = 3-O-(alpha-L-fucosyl)-L-seryl-[protein] + GDP + H(+). It catalyses the reaction L-threonyl-[protein] + GDP-beta-L-fucose = 3-O-(alpha-L-fucosyl)-L-threonyl-[protein] + GDP + H(+). It functions in the pathway protein modification; protein glycosylation. Catalyzes the reaction that attaches fucose through an O-glycosidic linkage to a conserved serine or threonine residue in the consensus sequence C1-X-X-S/T-C2 of thrombospondin type I repeats (TSRs) where C1 and C2 are the first and second cysteines of the repeat, respectively. O-fucosylates sporozoite proteins CSP and TRAP. O-fucosylation regulates stability and intracellular trafficking of TRAP but not of CSP. Probably by regulating protein O-fucosylation, may play a role in parasite transmission to the mosquito vector and/or infection of the vertebrate host hepatocytes; however, POFUT2 involvement in transmission/infection is controversial. This chain is GDP-fucose protein O-fucosyltransferase 2, found in Plasmodium falciparum (isolate NF54).